Reading from the N-terminus, the 185-residue chain is ATP synthase subunit b (185 aa).

The chain crosses the membrane as a helical span at residues 26-46 (LVLIGFAILLFIVIKFVVPMF).

Belongs to the ATPase B chain family. In terms of assembly, F-type ATPases have 2 components, F(1) - the catalytic core - and F(0) - the membrane proton channel. F(1) has five subunits: alpha(3), beta(3), gamma(1), delta(1), epsilon(1). F(0) has three main subunits: a(1), b(2) and c(10-14). The alpha and beta chains form an alternating ring which encloses part of the gamma chain. F(1) is attached to F(0) by a central stalk formed by the gamma and epsilon chains, while a peripheral stalk is formed by the delta and b chains.

It localises to the cell membrane. In terms of biological role, f(1)F(0) ATP synthase produces ATP from ADP in the presence of a proton or sodium gradient. F-type ATPases consist of two structural domains, F(1) containing the extramembraneous catalytic core and F(0) containing the membrane proton channel, linked together by a central stalk and a peripheral stalk. During catalysis, ATP synthesis in the catalytic domain of F(1) is coupled via a rotary mechanism of the central stalk subunits to proton translocation. Functionally, component of the F(0) channel, it forms part of the peripheral stalk, linking F(1) to F(0). The chain is ATP synthase subunit b from Renibacterium salmoninarum (strain ATCC 33209 / DSM 20767 / JCM 11484 / NBRC 15589 / NCIMB 2235).